The chain runs to 456 residues: Alcohol acyltransferase 16 (456 aa).

Catalysis depends on proton acceptor residues H167 and D382.

This sequence belongs to the plant acyltransferase family. In terms of tissue distribution, expressed in fruit.

The enzyme catalyses 3-(methylsulfanyl)propanoyl-CoA + butan-1-ol = butyl 3-(methylsulfanyl)propanoate + CoA. It catalyses the reaction ethanol + benzoyl-CoA = ethyl benzoate + CoA. The catalysed reaction is butan-1-ol + benzoyl-CoA = butyl benzoate + CoA. It carries out the reaction 2-(methylsulfanyl)acetyl-CoA + butan-1-ol = butyl 2-(methylsulfanyl)acetate + CoA. Functionally, involved in the biosynthesis of volatile esters which confer kiwifruit flavor. Alcohol acyl transferase that can use a wide range of alcohols as substrate to produce esters. Exhibits benzoyl-CoA:alcohol O-acyltransferase activity. This Actinidia chinensis var. chinensis (Chinese soft-hair kiwi) protein is Alcohol acyltransferase 16.